Here is a 416-residue protein sequence, read N- to C-terminus: Catalase-peroxidase 2 (416 aa).

The first 20 residues, 1-20 (MLLPLIVFLLSVLIHHRIYS), serve as a signal peptide directing secretion.

It belongs to the peroxidase family. Peroxidase/catalase subfamily. In terms of assembly, homodimer or homotetramer. Heme b is required as a cofactor. Post-translationally, formation of the three residue Trp-Tyr-Met cross-link is important for the catalase, but not the peroxidase activity of the enzyme.

It carries out the reaction H2O2 + AH2 = A + 2 H2O. It catalyses the reaction 2 H2O2 = O2 + 2 H2O. Functionally, bifunctional enzyme with both catalase and broad-spectrum peroxidase activity. This is Catalase-peroxidase 2 (katG2) from Alkaliphilus metalliredigens (strain QYMF).